We begin with the raw amino-acid sequence, 115 residues long: T cell receptor beta variable 11-1 (115 aa).

The N-terminal stretch at 1–21 (MSTRLLCWMALCLLGAELSEA) is a signal peptide. One can recognise an Ig-like domain in the interval 22–115 (EVAQSPRYKI…SAMYLCASSL (94 aa)). C42 and C111 are oxidised to a cystine.

Alpha-beta TR is a heterodimer composed of an alpha and beta chain; disulfide-linked. The alpha-beta TR is associated with the transmembrane signaling CD3 coreceptor proteins to form the TR-CD3 (TcR or TCR). The assembly of alpha-beta TR heterodimers with CD3 occurs in the endoplasmic reticulum where a single alpha-beta TR heterodimer associates with one CD3D-CD3E heterodimer, one CD3G-CD3E heterodimer and one CD247 homodimer forming a stable octameric structure. CD3D-CD3E and CD3G-CD3E heterodimers preferentially associate with TR alpha and TR beta chains, respectively. The association of the CD247 homodimer is the last step of TcR assembly in the endoplasmic reticulum and is required for transport to the cell surface.

The protein resides in the cell membrane. Its function is as follows. V region of the variable domain of T cell receptor (TR) beta chain that participates in the antigen recognition. Alpha-beta T cell receptors are antigen specific receptors which are essential to the immune response and are present on the cell surface of T lymphocytes. Recognize peptide-major histocompatibility (MH) (pMH) complexes that are displayed by antigen presenting cells (APC), a prerequisite for efficient T cell adaptive immunity against pathogens. Binding of alpha-beta TR to pMH complex initiates TR-CD3 clustering on the cell surface and intracellular activation of LCK that phosphorylates the ITAM motifs of CD3G, CD3D, CD3E and CD247 enabling the recruitment of ZAP70. In turn ZAP70 phosphorylates LAT, which recruits numerous signaling molecules to form the LAT signalosome. The LAT signalosome propagates signal branching to three major signaling pathways, the calcium, the mitogen-activated protein kinase (MAPK) kinase and the nuclear factor NF-kappa-B (NF-kB) pathways, leading to the mobilization of transcription factors that are critical for gene expression and essential for T cell growth and differentiation. The T cell repertoire is generated in the thymus, by V-(D)-J rearrangement. This repertoire is then shaped by intrathymic selection events to generate a peripheral T cell pool of self-MH restricted, non-autoaggressive T cells. Post-thymic interaction of alpha-beta TR with the pMH complexes shapes TR structural and functional avidity. This chain is T cell receptor beta variable 11-1, found in Homo sapiens (Human).